The sequence spans 425 residues: MNLLDQQTLINLLHQEADVAIGCTEPVMVALAAAKTRDMLGTLPRLVDISVSSAVWKNARRVGLPGTGEKGLAMAAAMGLLAPVEAGQRLLAALTPVQVEQAKILVREGVVKVGVVAAKEGLYARAVARSNQHEAIVELNGSHKNFSALWLDGRMAGGAGENLNLKLEALLAQDYQSLLKQVLSLSPEELYFLYQGAEDILTFAREIHQGGRNPLSAMASFFRRTESGGESLEVLIRNLTGIAVAERMAGATYPVLTCAGSGNQGILAAVSLLLAGQELRAGPESVTRALAIAHFTNMYLKAYTGKLSPLCGAVTGGAGVAAAICWLLEGSCQQIINAMQIVLGNLCCVICDGAKESCALKISTAAVEAVRAGYMACQGINLEAGTGIVGKKLEDTMELVRKVYQGGLGEIDYYLGKVDYLLSTN.

Belongs to the UPF0597 family.

The sequence is that of UPF0597 protein Moth_1414 from Moorella thermoacetica (strain ATCC 39073 / JCM 9320).